The following is a 363-amino-acid chain: Replication factor C subunit 4 (363 aa).

The residue at position 1 (Met-1) is an N-acetylmethionine. Positions 1–36 are disordered; it reads MQAFLKGTSISTKPPLTKDRGVAASAGSSGENKKAK. N6-acetyllysine is present on residues Lys-6 and Lys-13. ATP is bound at residue 78-85; it reads GPPGTGKT.

It belongs to the activator 1 small subunits family. Subunit of the RFC complex, an heteropentameric complex consisting of a large subunit RFC1 and four small subunits RFC2, RFC3, RFC4 and RFC5; the RFC complex interacts with PCNA. Forms an heterotetrameric complex with RFC2, RFC3 and RFC5; this complex has ATPase activity but is not stimulated by PCNA. The heterotetramer of subunits RFC2, RFC3, RFC4 and RFC5 interacts with RAD17. Interacts with ATAD5. Interacts with CTF18. Interacts with CNTD1; this interaction facilitates crossover formation.

It localises to the nucleus. Its function is as follows. Subunit of the replication factor C (RFC) complex which acts during elongation of primed DNA templates by DNA polymerases delta and epsilon, and is necessary for ATP-dependent loading of proliferating cell nuclear antigen (PCNA) onto primed DNA. The RFC4 subunit probably functions as a scaffold on which the other complex components can assemble. This Homo sapiens (Human) protein is Replication factor C subunit 4 (RFC4).